Reading from the N-terminus, the 219-residue chain is uncharacterized protein (219 aa).

The Cytoplasmic segment spans residues 1 to 15 (MLKLTTTSVTFHVLR). A helical transmembrane segment spans residues 16–36 (YFQLGLSVTNLLLASFAIITN). The Vacuolar portion of the chain corresponds to 37–41 (YKVDR). The helical transmembrane segment at 42 to 62 (ILRLSLAVSIISSVYFGIVRF) threads the bilayer. Position 63 (leucine 63) is a topological domain, cytoplasmic. A helical transmembrane segment spans residues 64-84 (PVLLIFVMEIVQTVLWFTAFV). The Vacuolar segment spans residues 85–116 (TLASKFGSMSCSSMPRGINFDYSGSCKIAKID). The helical transmembrane segment at 117-137 (ILPEAVLFILFLATTYASYIT) threads the bilayer. The Cytoplasmic segment spans residues 138-219 (VLSQAKENGS…VIDGSIEHSS (82 aa)). A disordered region spans residues 176-219 (PLLDLEVQEDARTETESIEDSTDSEDNANIEQEKVIDGSIEHSS). The segment covering 191 to 203 (ESIEDSTDSEDNA) has biased composition (acidic residues). Over residues 206-219 (EQEKVIDGSIEHSS) the composition is skewed to basic and acidic residues.

The protein localises to the vacuole membrane. This is an uncharacterized protein from Saccharomyces cerevisiae (strain ATCC 204508 / S288c) (Baker's yeast).